We begin with the raw amino-acid sequence, 195 residues long: Imidazoleglycerol-phosphate dehydratase (195 aa).

This sequence belongs to the imidazoleglycerol-phosphate dehydratase family.

It localises to the cytoplasm. The catalysed reaction is D-erythro-1-(imidazol-4-yl)glycerol 3-phosphate = 3-(imidazol-4-yl)-2-oxopropyl phosphate + H2O. It functions in the pathway amino-acid biosynthesis; L-histidine biosynthesis; L-histidine from 5-phospho-alpha-D-ribose 1-diphosphate: step 6/9. In Geobacter sp. (strain M21), this protein is Imidazoleglycerol-phosphate dehydratase.